The following is a 355-amino-acid chain: MKELKNDRYLRALLRQDVDMTPVWMMRQAGRYLPEYKATRAVAGDFMSLCRNAELACEVTLQPLRRYPLDAAILFSDILTVPDAMGLGLYFEQGEGPRFERPIKSMADVQALPIPDPEDELGYVMNAVRTIRRELKGEVPLIGFSGSPWTLATYMVEGGSSKAFTKIKQMMYAEPQTLHLLLDKLADSVIGYLNAQIKAGAQSVMVFDTWGGVLTPRDYRDFSLQYMHKIVDGLIRENEGRRVPVTLFTKNGGQWLEQIAATGCDALGLDWTIDIADAKRRVGDKVALQGNMDPSMLYAAPARIREEVATILAGFGSGNGHVFNLGHGIHQDVDPEHAGVFVNAVHELSAQYHGR.

Substrate contacts are provided by residues 27–31, Asp-77, Tyr-154, Thr-209, and His-327; that span reads RQAGR.

Belongs to the uroporphyrinogen decarboxylase family. As to quaternary structure, homodimer.

It localises to the cytoplasm. It carries out the reaction uroporphyrinogen III + 4 H(+) = coproporphyrinogen III + 4 CO2. Its pathway is porphyrin-containing compound metabolism; protoporphyrin-IX biosynthesis; coproporphyrinogen-III from 5-aminolevulinate: step 4/4. Functionally, catalyzes the decarboxylation of four acetate groups of uroporphyrinogen-III to yield coproporphyrinogen-III. In Aeromonas salmonicida (strain A449), this protein is Uroporphyrinogen decarboxylase.